A 144-amino-acid chain; its full sequence is uncharacterized protein (144 aa).

The N-acetyltransferase domain maps to 2 to 144 (IELDAINPNN…EDSVLLSKKL (143 aa)).

This sequence belongs to the acetyltransferase family.

It is found in the cytoplasm. The protein localises to the nucleus. This is an uncharacterized protein from Schizosaccharomyces pombe (strain 972 / ATCC 24843) (Fission yeast).